A 329-amino-acid chain; its full sequence is Isopenicillin N synthase (329 aa).

Arg-87, Tyr-91, and Tyr-189 together coordinate isopenicillin N. Residues Arg-87, Tyr-91, Tyr-189, His-212, and Asp-214 each contribute to the N-[(5S)-5-amino-5-carboxypentanoyl]-L-cysteinyl-D-valine site. The Fe2OG dioxygenase domain occupies 180 to 286; that stretch reads TLSAVTLIHY…RLSLPFFLHA (107 aa). Positions 212, 214, and 268 each coordinate Fe(2+). Arg-277 contacts 2-oxoglutarate. Ser-279 serves as a coordination point for isopenicillin N. An N-[(5S)-5-amino-5-carboxypentanoyl]-L-cysteinyl-D-valine-binding site is contributed by Ser-279.

Belongs to the iron/ascorbate-dependent oxidoreductase family. Requires Fe cation as cofactor. The cofactor is L-ascorbate.

It catalyses the reaction N-[(5S)-5-amino-5-carboxypentanoyl]-L-cysteinyl-D-valine + O2 = isopenicillin N + 2 H2O. It participates in antibiotic biosynthesis; penicillin G biosynthesis; penicillin G from L-alpha-aminoadipate and L-cysteine and L-valine: step 2/3. Its function is as follows. Removes, in the presence of oxygen, 4 hydrogen atoms from delta-L-(alpha-aminoadipyl)-L-cysteinyl-D-valine (ACV) to form the azetidinone and thiazolidine rings of isopenicillin. In Streptomyces griseus, this protein is Isopenicillin N synthase (pcbC).